A 240-amino-acid chain; its full sequence is UDP-2,3-diacylglucosamine hydrolase (240 aa).

Residues aspartate 8, histidine 10, aspartate 41, asparagine 78, and histidine 113 each coordinate Mn(2+). Substrate is bound at residue 78 to 79 (NR). Substrate is bound by residues aspartate 121, serine 159, asparagine 163, lysine 166, and histidine 194. Residues histidine 194 and histidine 196 each coordinate Mn(2+).

The protein belongs to the LpxH family. Mn(2+) serves as cofactor.

It is found in the cell inner membrane. It catalyses the reaction UDP-2-N,3-O-bis[(3R)-3-hydroxytetradecanoyl]-alpha-D-glucosamine + H2O = 2-N,3-O-bis[(3R)-3-hydroxytetradecanoyl]-alpha-D-glucosaminyl 1-phosphate + UMP + 2 H(+). Its pathway is glycolipid biosynthesis; lipid IV(A) biosynthesis; lipid IV(A) from (3R)-3-hydroxytetradecanoyl-[acyl-carrier-protein] and UDP-N-acetyl-alpha-D-glucosamine: step 4/6. Functionally, hydrolyzes the pyrophosphate bond of UDP-2,3-diacylglucosamine to yield 2,3-diacylglucosamine 1-phosphate (lipid X) and UMP by catalyzing the attack of water at the alpha-P atom. Involved in the biosynthesis of lipid A, a phosphorylated glycolipid that anchors the lipopolysaccharide to the outer membrane of the cell. In Shewanella baltica (strain OS223), this protein is UDP-2,3-diacylglucosamine hydrolase.